Reading from the N-terminus, the 245-residue chain is MISHILLDIEGTTCPVTFVTETLFPYAQLALKDFLERHKDDPSISQLINNAEDEWMQDQDKQSATLRHSSEEIQQPKHLKIESYLQLLIASDKKSTALKDIQGKVWKEGYTTGKITSELFEDAYEGLKKWHKQGFTLGIYSSGSVEAQRLLYKYTSKGDIENLFSHWFDTHIGNKKEQRSYTAIASSMACKPQNILFISDNSDECDAAKGAGLFTLYSLREGNPQQEPRDHPIIINLGDVDQWLK.

The protein belongs to the HAD-like hydrolase superfamily. MasA/MtnC family. As to quaternary structure, monomer. It depends on Mg(2+) as a cofactor.

It catalyses the reaction 5-methylsulfanyl-2,3-dioxopentyl phosphate + H2O = 1,2-dihydroxy-5-(methylsulfanyl)pent-1-en-3-one + phosphate. Its pathway is amino-acid biosynthesis; L-methionine biosynthesis via salvage pathway; L-methionine from S-methyl-5-thio-alpha-D-ribose 1-phosphate: step 3/6. It functions in the pathway amino-acid biosynthesis; L-methionine biosynthesis via salvage pathway; L-methionine from S-methyl-5-thio-alpha-D-ribose 1-phosphate: step 4/6. Its function is as follows. Bifunctional enzyme that catalyzes the enolization of 2,3-diketo-5-methylthiopentyl-1-phosphate (DK-MTP-1-P) into the intermediate 2-hydroxy-3-keto-5-methylthiopentenyl-1-phosphate (HK-MTPenyl-1-P), which is then dephosphorylated to form the acireductone 1,2-dihydroxy-3-keto-5-methylthiopentene (DHK-MTPene). The polypeptide is Enolase-phosphatase E1 (Synechococcus sp. (strain CC9902)).